Consider the following 569-residue polypeptide: Proline--tRNA ligase (569 aa).

It belongs to the class-II aminoacyl-tRNA synthetase family. ProS type 1 subfamily. Homodimer.

It localises to the cytoplasm. The enzyme catalyses tRNA(Pro) + L-proline + ATP = L-prolyl-tRNA(Pro) + AMP + diphosphate. Its function is as follows. Catalyzes the attachment of proline to tRNA(Pro) in a two-step reaction: proline is first activated by ATP to form Pro-AMP and then transferred to the acceptor end of tRNA(Pro). As ProRS can inadvertently accommodate and process non-cognate amino acids such as alanine and cysteine, to avoid such errors it has two additional distinct editing activities against alanine. One activity is designated as 'pretransfer' editing and involves the tRNA(Pro)-independent hydrolysis of activated Ala-AMP. The other activity is designated 'posttransfer' editing and involves deacylation of mischarged Ala-tRNA(Pro). The misacylated Cys-tRNA(Pro) is not edited by ProRS. This chain is Proline--tRNA ligase, found in Legionella pneumophila (strain Corby).